Reading from the N-terminus, the 1017-residue chain is GPI ethanolamine phosphate transferase 3 (1017 aa).

A helical transmembrane segment spans residues 34–54 (FYIILLVFIAILQFISIAFFT). 5 N-linked (GlcNAc...) asparagine glycosylation sites follow: Asn66, Asn71, Asn100, Asn182, and Asn203. Residues 347–367 (VSSLALLMGQPIPFNNLGWPI) traverse the membrane as a helical segment. The N-linked (GlcNAc...) asparagine glycan is linked to Asn411. A run of 6 helical transmembrane segments spans residues 457 to 477 (LLAT…SIVV), 484 to 504 (FVPG…GIFY), 515 to 535 (FWGT…ITIF), 558 to 578 (IAVM…FTIW), 582 to 602 (IVAF…VFLP), and 644 to 664 (LGGY…MITI). Asn681 and Asn682 each carry an N-linked (GlcNAc...) asparagine glycan. Residues 685-705 (WWVLGLCFLMIFILPACITGY) traverse the membrane as a helical segment. Asn707 carries an N-linked (GlcNAc...) asparagine glycan. Residues 715-735 (AAPIWINVFLKGILGLNFVYW) form a helical membrane-spanning segment. N-linked (GlcNAc...) asparagine glycosylation occurs at Asn742. 6 consecutive transmembrane segments (helical) span residues 765 to 785 (IIAG…PLCI), 806 to 826 (NIYG…ILLF), 829 to 849 (PLAQ…LEII), 903 to 923 (IAII…VALL), 947 to 967 (GILL…VTHF), and 981 to 1001 (FIFA…GTIA).

It belongs to the PIGG/PIGN/PIGO family. PIGO subfamily. Post-translationally, glycosylated.

It is found in the endoplasmic reticulum membrane. The protein operates within glycolipid biosynthesis; glycosylphosphatidylinositol-anchor biosynthesis. Functionally, involved in glycosylphosphatidylinositol-anchor biosynthesis. Transfers ethanolamine phosphate to the GPI third mannose which links the GPI-anchor to the C-terminus of the proteins by an amide bond. Involved in cell wall biosynthesis. The chain is GPI ethanolamine phosphate transferase 3 (GPI13) from Saccharomyces cerevisiae (strain ATCC 204508 / S288c) (Baker's yeast).